We begin with the raw amino-acid sequence, 405 residues long: Phosphopentomutase (405 aa).

Positions 10, 303, 308, 344, 345, and 356 each coordinate Mn(2+).

The protein belongs to the phosphopentomutase family. Mn(2+) is required as a cofactor.

The protein localises to the cytoplasm. The catalysed reaction is 2-deoxy-alpha-D-ribose 1-phosphate = 2-deoxy-D-ribose 5-phosphate. It catalyses the reaction alpha-D-ribose 1-phosphate = D-ribose 5-phosphate. The protein operates within carbohydrate degradation; 2-deoxy-D-ribose 1-phosphate degradation; D-glyceraldehyde 3-phosphate and acetaldehyde from 2-deoxy-alpha-D-ribose 1-phosphate: step 1/2. Isomerase that catalyzes the conversion of deoxy-ribose 1-phosphate (dRib-1-P) and ribose 1-phosphate (Rib-1-P) to deoxy-ribose 5-phosphate (dRib-5-P) and ribose 5-phosphate (Rib-5-P), respectively. The sequence is that of Phosphopentomutase from Shewanella frigidimarina (strain NCIMB 400).